Consider the following 562-residue polypeptide: Arginine--tRNA ligase (562 aa).

Residues 129-139 (ANPTGPLHVGH) carry the 'HIGH' region motif.

Belongs to the class-I aminoacyl-tRNA synthetase family. Monomer.

The protein resides in the cytoplasm. It catalyses the reaction tRNA(Arg) + L-arginine + ATP = L-arginyl-tRNA(Arg) + AMP + diphosphate. This is Arginine--tRNA ligase from Xanthomonas oryzae pv. oryzae (strain KACC10331 / KXO85).